The chain runs to 432 residues: Adenylosuccinate synthetase (432 aa).

Residues 12 to 18 (GDEGKGK) and 40 to 42 (GHT) each bind GTP. Asp-13 (proton acceptor) is an active-site residue. Mg(2+) contacts are provided by Asp-13 and Gly-40. Residues 13–16 (DEGK), 38–41 (NAGH), Thr-129, Arg-143, Gln-224, Thr-239, and Arg-303 each bind IMP. His-41 serves as the catalytic Proton donor. Substrate is bound at residue 299-305 (VTTGRRR). Residues Arg-305, 331–333 (KLD), and 413–415 (GVG) each bind GTP.

It belongs to the adenylosuccinate synthetase family. In terms of assembly, homodimer. Mg(2+) is required as a cofactor.

The protein localises to the cytoplasm. The enzyme catalyses IMP + L-aspartate + GTP = N(6)-(1,2-dicarboxyethyl)-AMP + GDP + phosphate + 2 H(+). It participates in purine metabolism; AMP biosynthesis via de novo pathway; AMP from IMP: step 1/2. Its function is as follows. Plays an important role in the de novo pathway of purine nucleotide biosynthesis. Catalyzes the first committed step in the biosynthesis of AMP from IMP. The sequence is that of Adenylosuccinate synthetase from Mycobacterium marinum (strain ATCC BAA-535 / M).